Here is a 56-residue protein sequence, read N- to C-terminus: MEKLFKEVKLEELENQKGSGLGKAQCAALWLQCASGGTIGCGGGAVACQNYRQFCR.

A propeptide spanning residues 1–19 (MEKLFKEVKLEELENQKGS) is cleaved from the precursor. 2 cysteine pairs are disulfide-bonded: Cys26–Cys55 and Cys33–Cys48. Residue Cys41 is glycosylated (S-linked (Glc) cysteine; by host).

Monomer. Production of active sublancin-168 requires at least one thiol-disulfide oxidoreductase (BdbB or, in its absence, BdbC). Membrane translocation and cleavage of the precursor are probably performed by SunT.

Its subcellular location is the secreted. Bacteriocin active against Gram-positive bacteria. Inhibits B.cereus spore outgrowth, after the germination stage, approximately 1000-fold better than it inhibits exponential growth of the same cells. Inhibits B.subtilis strain ATCC 6633. This chain is Bacteriocin sublancin-168 (sunA), found in Bacillus pumilus (Bacillus mesentericus).